The sequence spans 1962 residues: PIII-type proteinase (1962 aa).

An N-terminal signal peptide occupies residues 1–33 (MQRKKKGLSILLAGTVALGALAVLPVGEIQAKA). Residues 34 to 187 (AISQQTKGSS…VTLAKVYYPT (154 aa)) constitute a propeptide that is removed on maturation. The region spanning 191–697 (ANSMANVQAV…AGLVDVKAAI (507 aa)) is the Peptidase S8 domain. Residues Asp217, His281, and Ser620 each act as charge relay system in the active site. Positions 1796–1938 (GKGDGTTGTS…KTGETTERPA (143 aa)) are disordered. Over residues 1797-1812 (KGDGTTGTSDKGGGQG) the composition is skewed to gly residues. Polar residues-rich tracts occupy residues 1856-1865 (RNGQLTSGTS) and 1890-1903 (SQPS…TNPA). An LPXTG sorting signal motif is present at residues 1927 to 1931 (LPKTG). Thr1930 is modified (pentaglycyl murein peptidoglycan amidated threonine). Positions 1931-1962 (GETTERPAFGFLGVIVVSLMGVLGLKRKQREE) are cleaved as a propeptide — removed by sortase.

Belongs to the peptidase S8 family.

It is found in the secreted. Its subcellular location is the cell wall. It carries out the reaction Endopeptidase activity with very broad specificity, although some subsite preference have been noted, e.g. large hydrophobic residues in the P1 and P4 positions, and Pro in the P2 position. Best known for its action on caseins, although it has been shown to hydrolyze hemoglobin and oxidized insulin B-chain.. Its function is as follows. Protease which breaks down milk proteins during the growth of the bacteria on milk. In Lactococcus lactis subsp. cremoris (strain SK11), this protein is PIII-type proteinase (prtP).